A 336-amino-acid chain; its full sequence is Glyceraldehyde-3-phosphate dehydrogenase (336 aa).

Residues 12-13 (RI), aspartate 34, arginine 78, and threonine 121 contribute to the NAD(+) site. Residues 151 to 153 (SCT), threonine 182, arginine 199, 212 to 213 (TG), and arginine 235 contribute to the D-glyceraldehyde 3-phosphate site. Cysteine 152 functions as the Nucleophile in the catalytic mechanism. Asparagine 316 is a binding site for NAD(+).

The protein belongs to the glyceraldehyde-3-phosphate dehydrogenase family. In terms of assembly, homotetramer.

The protein resides in the cytoplasm. The enzyme catalyses D-glyceraldehyde 3-phosphate + phosphate + NAD(+) = (2R)-3-phospho-glyceroyl phosphate + NADH + H(+). It functions in the pathway carbohydrate degradation; glycolysis; pyruvate from D-glyceraldehyde 3-phosphate: step 1/5. Its function is as follows. Catalyzes the oxidative phosphorylation of glyceraldehyde 3-phosphate (G3P) to 1,3-bisphosphoglycerate (BPG) using the cofactor NAD. The first reaction step involves the formation of a hemiacetal intermediate between G3P and a cysteine residue, and this hemiacetal intermediate is then oxidized to a thioester, with concomitant reduction of NAD to NADH. The reduced NADH is then exchanged with the second NAD, and the thioester is attacked by a nucleophilic inorganic phosphate to produce BPG. The polypeptide is Glyceraldehyde-3-phosphate dehydrogenase (gap) (Streptococcus pyogenes serotype M3 (strain ATCC BAA-595 / MGAS315)).